The following is a 215-amino-acid chain: Protein GET1 (215 aa).

Topologically, residues Met-1–Leu-4 are lumenal. The chain crosses the membrane as a helical span at residues Ala-5–Ser-24. Topologically, residues Val-25–Leu-108 are cytoplasmic. Residues Ala-73–Ser-94 are a coiled coil. Residues Trp-109–Phe-129 traverse the membrane as a helical segment. Topologically, residues Trp-130–Ser-153 are lumenal. A helical membrane pass occupies residues Val-154 to Leu-170. The Cytoplasmic portion of the chain corresponds to Gln-171–Asp-215. The segment at Pro-182–Ala-202 is disordered.

Belongs to the WRB/GET1 family. Interacts with GET3.

It localises to the endoplasmic reticulum membrane. In terms of biological role, required for the post-translational delivery of tail-anchored (TA) proteins to the endoplasmic reticulum. Acts as a membrane receptor for soluble GET3, which recognizes and selectively binds the transmembrane domain of TA proteins in the cytosol. The protein is Protein GET1 of Cryptococcus neoformans var. neoformans serotype D (strain JEC21 / ATCC MYA-565) (Filobasidiella neoformans).